The primary structure comprises 251 residues: Cell division protein ZapD (251 aa).

Belongs to the ZapD family. Interacts with FtsZ.

The protein localises to the cytoplasm. Functionally, cell division factor that enhances FtsZ-ring assembly. Directly interacts with FtsZ and promotes bundling of FtsZ protofilaments, with a reduction in FtsZ GTPase activity. The protein is Cell division protein ZapD of Burkholderia lata (strain ATCC 17760 / DSM 23089 / LMG 22485 / NCIMB 9086 / R18194 / 383).